Here is a 317-residue protein sequence, read N- to C-terminus: Ubiquinone biosynthesis protein COQ9-A, mitochondrial (317 aa).

A mitochondrion-targeting transit peptide spans 1 to 46 (MAASVTRVLKGAGGRQLLLMVARRRPVLMQPFLLMPRKFWVSSALR). The segment at 50-97 (QRQPPFSASSTHAETQGHAEEQYQQKQPPPRYTDQAGEESEGYESEEQ) is disordered. Residues 53-63 (PPFSASSTHAE) show a composition bias toward polar residues. A compositionally biased stretch (acidic residues) spans 85–96 (AGEESEGYESEE). Position 243 (R243) interacts with a 1,2-diacylglycero-3-phosphoethanolamine.

This sequence belongs to the COQ9 family. Homodimer. Heterodimer; two heterodimers of COQ7:COQ9 come together on the same side of the lipid pseudo-bilayer and form a curved tetramer with a hydrophobic surface suitable for membrane interaction. These two tetramers assemble into a soluble octamer with a pseudo-bilayer of lipids captured within. Interacts with COQ7; this interaction allows ubiquinone (CoQ) isoprene intermediates presentation to COQ7 and facilitates the COQ7-mediated hydroxylase step.

The protein resides in the mitochondrion. Its pathway is cofactor biosynthesis; ubiquinone biosynthesis. Functionally, membrane-associated protein that warps the membrane surface to access and bind aromatic isoprenes with high specificity, including ubiquinone (CoQ) isoprene intermediates and presents them directly to COQ7, therefore facilitating the COQ7-mediated hydroxylase step. Participates in the biosynthesis of coenzyme Q, also named ubiquinone, an essential lipid-soluble electron transporter for aerobic cellular respiration. The sequence is that of Ubiquinone biosynthesis protein COQ9-A, mitochondrial (coq9-a) from Xenopus laevis (African clawed frog).